The following is a 365-amino-acid chain: Phospho-N-acetylmuramoyl-pentapeptide-transferase (365 aa).

Transmembrane regions (helical) follow at residues 19–39 (TLLI…SSWA), 49–69 (LLIA…AVVP), 92–112 (AGTP…IAVV), 116–136 (FNPD…IGWV), 156–176 (LFLQ…YGPT), 183–203 (IMQF…FALV), 215–235 (VDGL…LLVA), 238–258 (NPAL…FVHH), 279–299 (LAAV…SGIF), and 345–365 (QIVG…MATA).

The protein belongs to the glycosyltransferase 4 family. MraY subfamily. Mg(2+) is required as a cofactor.

The protein resides in the cell inner membrane. It carries out the reaction UDP-N-acetyl-alpha-D-muramoyl-L-alanyl-gamma-D-glutamyl-meso-2,6-diaminopimeloyl-D-alanyl-D-alanine + di-trans,octa-cis-undecaprenyl phosphate = di-trans,octa-cis-undecaprenyl diphospho-N-acetyl-alpha-D-muramoyl-L-alanyl-D-glutamyl-meso-2,6-diaminopimeloyl-D-alanyl-D-alanine + UMP. Its pathway is cell wall biogenesis; peptidoglycan biosynthesis. Functionally, catalyzes the initial step of the lipid cycle reactions in the biosynthesis of the cell wall peptidoglycan: transfers peptidoglycan precursor phospho-MurNAc-pentapeptide from UDP-MurNAc-pentapeptide onto the lipid carrier undecaprenyl phosphate, yielding undecaprenyl-pyrophosphoryl-MurNAc-pentapeptide, known as lipid I. The chain is Phospho-N-acetylmuramoyl-pentapeptide-transferase from Synechocystis sp. (strain ATCC 27184 / PCC 6803 / Kazusa).